Here is a 902-residue protein sequence, read N- to C-terminus: 4-hydroxyphenylacetate decarboxylase glycyl radical subunit (902 aa).

Residues 38–774 enclose the PFL domain; sequence KRAEDLLDVY…ATLATPDGRL (737 aa). 4-hydroxyphenylacetate-binding residues include S348 and C507. Catalysis depends on C507, which acts as the Cysteine radical intermediate. Catalysis depends on E509, which acts as the Proton donor. Residues H540 and E641 each coordinate 4-hydroxyphenylacetate. Residues 782-902 enclose the Glycine radical domain; the sequence is GSVSAYAGTD…VIARTEYEGV (121 aa). G877 carries the glycine radical modification.

It belongs to the glycyl radical enzyme (GRE) family. HPAD subfamily. Heterooctamer consisting of 4 large (HpdB) subunits and 4 small (HpdC) subunits, arranged as a tetramer of heterodimers. Also forms a catalytically inactive homodimer. Requires the activating protein CsdA to generate the key active site glycyl radical that is involved in catalysis. Post-translationally, phosphorylated on serine. Phosphorylation may trigger the formation of the active heterooctamers and thereby regulates enzyme activity.

It catalyses the reaction 4-hydroxyphenylacetate + H(+) = 4-methylphenol + CO2. It carries out the reaction 3,4-dihydroxyphenylacetate + H(+) = 4-methylcatechol + CO2. Functionally, glycyl radical subunit of the HPA decarboxylase that decarboxylates phenylacetates with a hydroxyl group in the p-position. Active toward 4-hydroxyphenylacetate and 3,4-dihydroxyphenylacetate, forming 4-methylphenol and 4-methylcatechol, respectively. Is likely involved in the catabolism of aromatic amino acids such as tyrosine fermentation. 4-methylphenol (p-cresol) formation provides metabolic toxicity, which allows an active suppression of other microbes and may provide growth advantages for the producers in highly competitive environments. The large subunit is the catalytic subunit that binds the substrate. The chain is 4-hydroxyphenylacetate decarboxylase glycyl radical subunit from Clostridioides difficile (strain CD196) (Peptoclostridium difficile).